The following is a 187-amino-acid chain: Transmembrane protein 212 (187 aa).

Helical transmembrane passes span 11-31, 42-62, 76-96, 106-126, and 148-168; these read TLVT…FPVF, VWIA…SLVL, AVFT…TVAL, FYSF…TFPF, and LQVL…AVFI.

It is found in the membrane. This chain is Transmembrane protein 212 (Tmem212), found in Mus musculus (Mouse).